A 76-amino-acid chain; its full sequence is U-scoloptoxin(13)-Sa1a (76 aa).

An N-terminal signal peptide occupies residues 1–22; it reads MAYIFALIFAFVVCINTDVIQA.

This sequence belongs to the scoloptoxin-13 family. Contains 4 disulfide bonds. In terms of tissue distribution, expressed by the venom gland.

Its subcellular location is the secreted. The chain is U-scoloptoxin(13)-Sa1a from Scolopendra alternans (Florida Keys giant centipede).